We begin with the raw amino-acid sequence, 605 residues long: Elongation factor 4 (605 aa).

One can recognise a tr-type G domain in the interval 11–193 (KRIRNFSIIA…RIVTQISPPK (183 aa)). GTP is bound by residues 23–28 (DHGKST) and 140–143 (NKVD).

Belongs to the TRAFAC class translation factor GTPase superfamily. Classic translation factor GTPase family. LepA subfamily.

The protein localises to the cell membrane. The enzyme catalyses GTP + H2O = GDP + phosphate + H(+). Its function is as follows. Required for accurate and efficient protein synthesis under certain stress conditions. May act as a fidelity factor of the translation reaction, by catalyzing a one-codon backward translocation of tRNAs on improperly translocated ribosomes. Back-translocation proceeds from a post-translocation (POST) complex to a pre-translocation (PRE) complex, thus giving elongation factor G a second chance to translocate the tRNAs correctly. Binds to ribosomes in a GTP-dependent manner. This Phytoplasma australiense protein is Elongation factor 4.